The chain runs to 95 residues: Large ribosomal subunit protein bL21 (95 aa).

The protein belongs to the bacterial ribosomal protein bL21 family. As to quaternary structure, part of the 50S ribosomal subunit. Contacts protein L20.

Its function is as follows. This protein binds to 23S rRNA in the presence of protein L20. This is Large ribosomal subunit protein bL21 from Chlorobaculum tepidum (strain ATCC 49652 / DSM 12025 / NBRC 103806 / TLS) (Chlorobium tepidum).